Here is a 636-residue protein sequence, read N- to C-terminus: Putative ankyrin repeat protein L766 (636 aa).

11 ANK repeats span residues 63 to 97 (NNYLTSHVIKSTKYSLLDVNTVQMLLDYKDPDYEL), 99 to 129 (STCHLYIFYMTKNRFDICDYLIASNIKYIDS), 130 to 159 (FGNISLLNSTNLNNYQLIKYIIDNNEFFNC), 161 to 190 (YYYLMLGILRYTKFYDLVDYILELISKSNN), 230 to 259 (FDEKVLFDTVICNNFELTKYLVEKGFNYDF), 261 to 284 (TIINSNVKFDVLKYFIELGNYLTD), 322 to 355 (SRIIHFEFYLLDYLTNKLNIIELIDLDLLMKTSI), 372 to 400 (NPDEYMEFAIKHDICIAKKLMELGGNIPD), 425 to 455 (DSLENLLPKIINNCDSEIIMYIIKKLTDTTI), 517 to 546 (NSIELLFVVTLSENIELFKLLLEINCNDNN), and 548 to 575 (LSWAFVFSIGCFKLMKYIVDNYNIDIYQ).

This chain is Putative ankyrin repeat protein L766, found in Acanthamoeba polyphaga mimivirus (APMV).